The sequence spans 498 residues: Glycerol kinase (498 aa).

Residue threonine 12 participates in ADP binding. ATP is bound by residues threonine 12, threonine 13, and serine 14. Threonine 12 contacts sn-glycerol 3-phosphate. Arginine 16 is a binding site for ADP. 4 residues coordinate sn-glycerol 3-phosphate: arginine 82, glutamate 83, tyrosine 134, and aspartate 243. Glycerol-binding residues include arginine 82, glutamate 83, tyrosine 134, aspartate 243, and glutamine 244. Residues threonine 265 and glycine 308 each coordinate ADP. ATP-binding residues include threonine 265, glycine 308, glutamine 312, and glycine 411. An ADP-binding site is contributed by glycine 411.

This sequence belongs to the FGGY kinase family.

The enzyme catalyses glycerol + ATP = sn-glycerol 3-phosphate + ADP + H(+). It functions in the pathway polyol metabolism; glycerol degradation via glycerol kinase pathway; sn-glycerol 3-phosphate from glycerol: step 1/1. Its activity is regulated as follows. Inhibited by fructose 1,6-bisphosphate (FBP). Its function is as follows. Key enzyme in the regulation of glycerol uptake and metabolism. Catalyzes the phosphorylation of glycerol to yield sn-glycerol 3-phosphate. The protein is Glycerol kinase of Brucella canis (strain ATCC 23365 / NCTC 10854 / RM-666).